Here is a 431-residue protein sequence, read N- to C-terminus: Glutamate--tRNA ligase 1 (431 aa).

A 'HIGH' region motif is present at residues 6-16 (PSPTGDMHIGN). The 'KMSKS' region signature appears at 235–239 (KMSKR). Lysine 238 serves as a coordination point for ATP.

Belongs to the class-I aminoacyl-tRNA synthetase family. Glutamate--tRNA ligase type 1 subfamily. As to quaternary structure, monomer.

It is found in the cytoplasm. The enzyme catalyses tRNA(Glu) + L-glutamate + ATP = L-glutamyl-tRNA(Glu) + AMP + diphosphate. In terms of biological role, catalyzes the attachment of glutamate to tRNA(Glu) in a two-step reaction: glutamate is first activated by ATP to form Glu-AMP and then transferred to the acceptor end of tRNA(Glu). This chain is Glutamate--tRNA ligase 1, found in Campylobacter jejuni subsp. jejuni serotype O:2 (strain ATCC 700819 / NCTC 11168).